Consider the following 420-residue polypeptide: Multiple sugar-binding protein (420 aa).

An N-terminal signal peptide occupies residues 1 to 22 (MKWYKKIGLLGIVGLTSVLLAA). C23 carries N-palmitoyl cysteine lipidation. C23 carries S-diacylglycerol cysteine lipidation.

The protein belongs to the bacterial solute-binding protein 1 family.

The protein localises to the cell membrane. Its function is as follows. Involved in a binding protein-dependent transport system responsible for the uptake of melibiose, raffinose and isomaltotriose. This chain is Multiple sugar-binding protein, found in Streptococcus mutans serotype c (strain ATCC 700610 / UA159).